A 297-amino-acid chain; its full sequence is B-lymphocyte antigen CD20 (297 aa).

The Cytoplasmic segment spans residues 1-51; it reads MTTPRNSMSGTLPVDPMKSPTAMYPVQKIIPKRMPSVVGPTQNFFMRESKT. Residue S36 is modified to Phosphoserine. The helical transmembrane segment at 52 to 72 threads the bilayer; it reads LGAVQIMNGLFHIALGSLLMI. Residues 73–75 lie on the Extracellular side of the membrane; sequence HTD. The chain crosses the membrane as a helical span at residues 76–96; sequence VCAPICITMWYPLWGGIMFII. Topologically, residues 97-122 are cytoplasmic; sequence SGSLLAAADKNPRKSLVKGKMIMNSL. The chain crosses the membrane as a helical span at residues 123–143; that stretch reads SLFAAISGIIFLIMDIFNITI. The Extracellular portion of the chain corresponds to 144-188; the sequence is SHFFKMENLNLIKAPMPYVDIHNCDPANPSEKNSLSIQYCGSIRS. A helical membrane pass occupies residues 189–209; that stretch reads VFLGVFAVMLIFAFFQKLVTA. At 210–297 the chain is on the cytoplasmic side; the sequence is GIVENEWKKL…SSPIENDSIP (88 aa). Residue C220 is the site of S-palmitoyl cysteine attachment. S225 carries the post-translational modification Phosphoserine. The tract at residues 274–297 is disordered; that stretch reads ELEINFAEPPQEQESSPIENDSIP. The span at 281–290 shows a compositional bias: low complexity; sequence EPPQEQESSP.

The protein belongs to the MS4A family. As to quaternary structure, forms homotetramers. Interacts with the heavy and light chains of cell surface IgM, the antigen-binding components of the BCR. Phosphorylated. Might be functionally regulated by protein kinase(s). Expressed in PBMCs and lymph node from healthy dogs, in B-cells of canine lymphoma, but not in T-cell lymphoma cells and non-T and non-B-cell lymphoma cells.

It localises to the cell membrane. Its function is as follows. B-lymphocyte-specific membrane protein that plays a role in the regulation of cellular calcium influx necessary for the development, differentiation, and activation of B-lymphocytes. Functions as a store-operated calcium (SOC) channel component promoting calcium influx after activation by the B-cell receptor/BCR. This is B-lymphocyte antigen CD20 (MS4A1) from Canis lupus familiaris (Dog).